We begin with the raw amino-acid sequence, 301 residues long: Cell division protein kinase 2 homolog CRK1 (301 aa).

Residues 5-297 (YERQEKIGEG…AADALNHPYF (293 aa)) form the Protein kinase domain. Residues 11-19 (IGEGTYGVV) and Lys-34 contribute to the ATP site. The active-site Proton acceptor is Asp-127. Thr-160 bears the Phosphothreonine; by CAK mark.

Belongs to the protein kinase superfamily. CMGC Ser/Thr protein kinase family. CDC2/CDKX subfamily. As to quaternary structure, forms a stable but non-covalent complex with a regulatory subunit and with a cyclin.

It catalyses the reaction [DNA-directed RNA polymerase] + ATP = phospho-[DNA-directed RNA polymerase] + ADP + H(+). Its activity is regulated as follows. Phosphorylation at Thr-15 or Tyr-16 inactivates the enzyme, while phosphorylation at Thr-160 activates it. Functionally, may be involved in some stage-specific role in the promastigote cell cycle. The polypeptide is Cell division protein kinase 2 homolog CRK1 (CRK1) (Leishmania mexicana).